Reading from the N-terminus, the 102-residue chain is Glycoprotein 24A (102 aa).

This sequence belongs to the csb family. O-glycosylated.

It is found in the cell surface. In terms of biological role, cell-cell adhesion during early development. The chain is Glycoprotein 24A (csbA) from Dictyostelium discoideum (Social amoeba).